Here is a 190-residue protein sequence, read N- to C-terminus: Shikimate kinase (190 aa).

Gly-15–Thr-20 is a binding site for ATP. Ser-19 is a Mg(2+) binding site. Residues Asp-37, Arg-61, and Gly-83 each coordinate substrate. An ATP-binding site is contributed by Arg-121. Arg-148 lines the substrate pocket.

The protein belongs to the shikimate kinase family. As to quaternary structure, monomer. Mg(2+) serves as cofactor.

It is found in the cytoplasm. The catalysed reaction is shikimate + ATP = 3-phosphoshikimate + ADP + H(+). Its pathway is metabolic intermediate biosynthesis; chorismate biosynthesis; chorismate from D-erythrose 4-phosphate and phosphoenolpyruvate: step 5/7. Catalyzes the specific phosphorylation of the 3-hydroxyl group of shikimic acid using ATP as a cosubstrate. The polypeptide is Shikimate kinase (Chlorobium chlorochromatii (strain CaD3)).